Here is a 173-residue protein sequence, read N- to C-terminus: MTRILGIDPGSQRTGVGVIDVDEYGCSHHVYHAPLVLLGQSSFAGRLKQLLLGLSAVIEEYSPKEVAIEKVFMSKNADSALKLGQARGVAISAVVLRDLPVHEYAARQIKLAVVGRGGADKQQIQHMVGVMLNLQGRLQSDAADALAVAITHAHVSATAQRLGVSTKQAWSRK.

Catalysis depends on residues D8, E69, and D141. The Mg(2+) site is built by D8, E69, and D141.

This sequence belongs to the RuvC family. Homodimer which binds Holliday junction (HJ) DNA. The HJ becomes 2-fold symmetrical on binding to RuvC with unstacked arms; it has a different conformation from HJ DNA in complex with RuvA. In the full resolvosome a probable DNA-RuvA(4)-RuvB(12)-RuvC(2) complex forms which resolves the HJ. Requires Mg(2+) as cofactor.

The protein resides in the cytoplasm. The catalysed reaction is Endonucleolytic cleavage at a junction such as a reciprocal single-stranded crossover between two homologous DNA duplexes (Holliday junction).. The RuvA-RuvB-RuvC complex processes Holliday junction (HJ) DNA during genetic recombination and DNA repair. Endonuclease that resolves HJ intermediates. Cleaves cruciform DNA by making single-stranded nicks across the HJ at symmetrical positions within the homologous arms, yielding a 5'-phosphate and a 3'-hydroxyl group; requires a central core of homology in the junction. The consensus cleavage sequence is 5'-(A/T)TT(C/G)-3'. Cleavage occurs on the 3'-side of the TT dinucleotide at the point of strand exchange. HJ branch migration catalyzed by RuvA-RuvB allows RuvC to scan DNA until it finds its consensus sequence, where it cleaves and resolves the cruciform DNA. This is Crossover junction endodeoxyribonuclease RuvC from Xylella fastidiosa (strain Temecula1 / ATCC 700964).